We begin with the raw amino-acid sequence, 436 residues long: MARTKSRKRSGNNQNKNASVVNNKAEIAAMIDARRLEQKKKGGVTNSKGKTNKVVDAKLEKEFKDVLQRFQVQENDTPKEITKDEKNNHVVIVEKNPVMNRKHTAEDELEDTPSDGIEEHLSARKRRKTEKPSLSQLKSQVPYPQIIEWYDCDARYPGLLASIKCTKNVIPVPSHWQSKKEYLSGRSLLGKRPFELPDIIKKTNIEQMRSTLPQSGLDGQDEKSLKEASRARVQPKMGALDLDYKKLHDVFFKIGANWKPDHLLCFGDVYYENRNLFEETNWKRMVDHKRPGRISQELRAIMNLPEGQLPPWCMKMKDIGLPTGYPDLKIAGLNWDITNLKGDVYGKIIPNHHSRSKKQGRNYFGALISFETPEFENSKEDTQANAENGRQDDKIDDEVEHKLDHFQEDISEVTSAEEKLERNEEESEKQLYTVLK.

The span at 1–10 (MARTKSRKRS) shows a compositional bias: basic residues. Residues 1–22 (MARTKSRKRSGNNQNKNASVVN) are disordered. Residues 12–22 (NNQNKNASVVN) are compositionally biased toward low complexity. Threonine 104 and threonine 112 each carry phosphothreonine. Phosphoserine is present on serine 114. A disordered region spans residues 374 to 436 (EFENSKEDTQ…SEKQLYTVLK (63 aa)). A compositionally biased stretch (basic and acidic residues) spans 389–408 (GRQDDKIDDEVEHKLDHFQE).

This sequence to mammalian SAP 145. Some, to C.elegans ZK632.11. As to quaternary structure, belongs to the CWC complex (or CEF1-associated complex), a spliceosome sub-complex reminiscent of a late-stage spliceosome composed of the U2, U5 and U6 snRNAs and at least BUD13, BUD31, BRR2, CDC40, CEF1, CLF1, CUS1, CWC2, CWC15, CWC21, CWC22, CWC23, CWC24, CWC25, CWC27, ECM2, HSH155, IST3, ISY1, LEA1, MSL1, NTC20, PRP8, PRP9, PRP11, PRP19, PRP21, PRP22, PRP45, PRP46, SLU7, SMB1, SMD1, SMD2, SMD3, SMX2, SMX3, SNT309, SNU114, SPP2, SYF1, SYF2, RSE1 and YJU2. Interacts with RDS3.

Its subcellular location is the nucleus. Essential splicing protein required for U2 snRNP binding to pre-mRNA during spliceosome assembly. In Saccharomyces cerevisiae (strain ATCC 204508 / S288c) (Baker's yeast), this protein is Cold sensitive U2 snRNA suppressor 1 (CUS1).